Consider the following 286-residue polypeptide: uncharacterized protein (286 aa).

2 disordered regions span residues 59-89 (PESAPGKPGCAEAESAGTAAATESHGAPGAK) and 225-286 (RQRK…EDTR). Over residues 69–85 (AEAESAGTAAATESHGA) the composition is skewed to low complexity.

This is an uncharacterized protein from Mus musculus (Mouse).